We begin with the raw amino-acid sequence, 44 residues long: Photosystem I reaction center subunit IX (44 aa).

A helical transmembrane segment spans residues 7 to 27; sequence YLSVAPVLSTLWFGALAGLLI.

Belongs to the PsaJ family.

It is found in the plastid. The protein resides in the chloroplast thylakoid membrane. May help in the organization of the PsaE and PsaF subunits. The chain is Photosystem I reaction center subunit IX from Eucalyptus globulus subsp. globulus (Tasmanian blue gum).